A 130-amino-acid chain; its full sequence is Small ribosomal subunit protein uS8 (130 aa).

Lys88 is modified (N6-succinyllysine).

It belongs to the universal ribosomal protein uS8 family. In terms of assembly, component of the small ribosomal subunit. Part of the small subunit (SSU) processome, composed of more than 70 proteins and the RNA chaperone small nucleolar RNA (snoRNA) U3.

The protein localises to the cytoplasm. The protein resides in the nucleus. It is found in the nucleolus. Its function is as follows. Component of the small ribosomal subunit. The ribosome is a large ribonucleoprotein complex responsible for the synthesis of proteins in the cell. Part of the small subunit (SSU) processome, first precursor of the small eukaryotic ribosomal subunit. During the assembly of the SSU processome in the nucleolus, many ribosome biogenesis factors, an RNA chaperone and ribosomal proteins associate with the nascent pre-rRNA and work in concert to generate RNA folding, modifications, rearrangements and cleavage as well as targeted degradation of pre-ribosomal RNA by the RNA exosome. Required for proper erythropoiesis. This chain is Small ribosomal subunit protein uS8 (Rps15a), found in Mus musculus (Mouse).